Consider the following 771-residue polypeptide: Topoisomerase 1-associated factor 2 (771 aa).

Disordered stretches follow at residues 48-69 (NSIN…SIQS), 271-330 (EGVV…ISFD), and 346-367 (SDMH…KSSL). The segment covering 51–69 (NNCSDPSPTSPSSQNSIQS) has biased composition (low complexity). A compositionally biased stretch (polar residues) spans 275-294 (TQGSDNNKENIPSSTQQQKN). Over residues 295–307 (DGAKRAESKDLDL) the composition is skewed to basic and acidic residues. Over residues 346 to 359 (SDMHIQYSNPSSGA) the composition is skewed to polar residues. Serine 397 is modified (phosphoserine). Threonine 405 carries the post-translational modification Phosphothreonine. Positions 633 to 771 (NSKDKVEATS…KYVESDEDDQ (139 aa)) are disordered. Residues 640–652 (ATSNSTAQEQEQV) show a composition bias toward polar residues. Positions 690–709 (SHSSPSSSSSMSLESSLDSS) are enriched in low complexity.

This sequence to yeast YJL076w. Interacts with HPR1.

The protein resides in the nucleus. In Saccharomyces cerevisiae (strain ATCC 204508 / S288c) (Baker's yeast), this protein is Topoisomerase 1-associated factor 2 (TOF2).